The following is a 309-amino-acid chain: Taste receptor type 2 member 46 (309 aa).

Residue Met1 is a topological domain, extracellular. The chain crosses the membrane as a helical span at residues 2–22 (ITFLPITFSILIVVIFFIGNF). Topologically, residues 23 to 46 (ANGFIALINSIEWVKRQKISFAGQ) are cytoplasmic. A helical transmembrane segment spans residues 47-67 (ILTALAVSRVGLLWVLSLHWY). Topologically, residues 68-86 (ATEFNLAFHSVEVRSTAYN) are extracellular. A helical transmembrane segment spans residues 87 to 107 (VWVVTNHFSNWLSTSLSMFYL). Residues 108 to 126 (LRIATFSNLIFLHLNRRVK) lie on the Cytoplasmic side of the membrane. A helical transmembrane segment spans residues 127-147 (SVILVTLLGPLLFLVCQLFVM). Residues 148–178 (NMNQIVRTKEYEGNMTWKIKLKSAMYLSNTT) are Extracellular-facing. N-linked (GlcNAc...) asparagine glycosylation is found at Asn161 and Asn176. Residues 179–199 (VAMLANFVPLTLTLISFLLLI) form a helical membrane-spanning segment. Residues 200–229 (CSLCKHLKKMRVHGKGSQDPSTKVHTKALQ) lie on the Cytoplasmic side of the membrane. A helical membrane pass occupies residues 230-250 (IVTSFLLVCAIYFLSIILSVW). The Extracellular segment spans residues 251–259 (NSGGLENKP). A helical membrane pass occupies residues 260–280 (FFMFCQAIKFSYPSTHPFILI). The Cytoplasmic portion of the chain corresponds to 281–309 (WGNKTLKQTFLSVLRNVRYWVKGQKPSSP).

The protein belongs to the G-protein coupled receptor T2R family.

The protein resides in the membrane. The protein localises to the cell projection. It is found in the cilium membrane. Its function is as follows. Receptor that may play a role in the perception of bitterness and is gustducin-linked. May play a role in sensing the chemical composition of the gastrointestinal content. The activity of this receptor may stimulate alpha gustducin, mediate PLC-beta-2 activation and lead to the gating of TRPM5. In airway epithelial cells, binding of bitter compounds increases the intracellular calcium ion concentration and stimulates ciliary beat frequency. The chain is Taste receptor type 2 member 46 (TAS2R46) from Papio hamadryas (Hamadryas baboon).